The primary structure comprises 92 residues: Alpha-conotoxin FrXXA (92 aa).

An N-terminal signal peptide occupies residues 1–24 (MPKLEMMLLVLLILPLSYFDSAGG). Residues 25–45 (QAVKVDGHGDGMDRYLQRDDR) constitute a propeptide that is removed on maturation. Cystine bridges form between Cys63–Cys72, Cys68–Cys80, Cys73–Cys90, and Cys78–Cys92.

This sequence belongs to the conotoxin D superfamily. Homodimer; disulfide-linked. The homodimer contains 10 disulfide bonds. As to expression, expressed by the venom duct.

It localises to the secreted. In terms of biological role, alpha-conotoxins act on postsynaptic membranes, they bind to the nicotinic acetylcholine receptors (nAChR) and thus inhibit them. Through its two C-terminal domains, this homodimeric protein would bind to two nAChR allosteric sites, located outside the nAChR C-loop of the principal binding face and at the adjacent binding interface in a clockwise direction. This toxin blocks both neuronal and muscular subtypes: human alpha-7/CHRNA7, human alpha-3-beta-2 (CHRNA3-CHRNB2), human alpha-4-beta-2 (CHRNA4-CHRNB2), mouse adult muscular subtype alpha-1-beta-1-delta-epsilon (CHRNA1-CHRNB1-CHRND-CHRNE), and mouse fetal muscular subtype alpha-1-beta-1-gamma-delta (CHRNA1-CHRNB1-CHRNG-CHRND). Shows different dissociation rates towards the different subtypes, with a very slow rate towards alpha-7 subtype (almost irreversible), followed by the adult muscular subtype, the fetal muscular subtype, alpha-3-beta-2 and alpha-4-beta-2 (almost entirely reversible within a few minutes of washing). The polypeptide is Alpha-conotoxin FrXXA (Conus fergusoni (Ferguson's cone)).